A 186-amino-acid polypeptide reads, in one-letter code: MVDVKTCLDNAQEKMDMAVMYLEEALAHIRAGKASTRLLDGIRVDSYGSMVPISNVAALSTPDARSITIKPWDKSMFRAIEKAIIDSDLGIMPENNGEVIRIGIPPLTEERRRQLAKQCKAEGETAKVSVRNARRDGIDALKKAVKDGLAEDEQKNAEAKLQKIHDKYIKQIEDMLADKDKEIMTV.

Belongs to the RRF family.

The protein resides in the cytoplasm. Responsible for the release of ribosomes from messenger RNA at the termination of protein biosynthesis. May increase the efficiency of translation by recycling ribosomes from one round of translation to another. The polypeptide is Ribosome-recycling factor (Bacteroides thetaiotaomicron (strain ATCC 29148 / DSM 2079 / JCM 5827 / CCUG 10774 / NCTC 10582 / VPI-5482 / E50)).